A 218-amino-acid chain; its full sequence is Octanoyltransferase (218 aa).

A BPL/LPL catalytic domain is found at 32–214 (VLTADEIWLV…HFTQLLGYND (183 aa)). Substrate-binding positions include 71–78 (RGGQITYH), 143–145 (SLG), and 156–158 (GLA). The active-site Acyl-thioester intermediate is C174.

Belongs to the LipB family.

The protein localises to the cytoplasm. The enzyme catalyses octanoyl-[ACP] + L-lysyl-[protein] = N(6)-octanoyl-L-lysyl-[protein] + holo-[ACP] + H(+). It participates in protein modification; protein lipoylation via endogenous pathway; protein N(6)-(lipoyl)lysine from octanoyl-[acyl-carrier-protein]: step 1/2. Functionally, catalyzes the transfer of endogenously produced octanoic acid from octanoyl-acyl-carrier-protein onto the lipoyl domains of lipoate-dependent enzymes. Lipoyl-ACP can also act as a substrate although octanoyl-ACP is likely to be the physiological substrate. The polypeptide is Octanoyltransferase (Histophilus somni (strain 2336) (Haemophilus somnus)).